We begin with the raw amino-acid sequence, 331 residues long: Cytosolic sulfotransferase 1 (331 aa).

74–79 (KSGTTW) is a binding site for 3'-phosphoadenylyl sulfate. The active-site Proton acceptor is His143. 3'-phosphoadenylyl sulfate is bound by residues Arg165, Ser173, Tyr231, and 297–299 (RKG).

The protein belongs to the sulfotransferase 1 family.

The protein resides in the cytoplasm. Sulfotransferase that utilizes 3'-phospho-5'-adenylyl sulfate (PAPS) as sulfonate donor. This Arabidopsis thaliana (Mouse-ear cress) protein is Cytosolic sulfotransferase 1 (SOT1).